A 367-amino-acid chain; its full sequence is Putative methylthioribose-1-phosphate isomerase (367 aa).

Residues 65 to 67 (RGA), arginine 106, and glutamine 218 contribute to the substrate site. The active-site Proton donor is the aspartate 259. 269-270 (NK) lines the substrate pocket.

This sequence belongs to the eIF-2B alpha/beta/delta subunits family. MtnA subfamily.

It carries out the reaction 5-(methylsulfanyl)-alpha-D-ribose 1-phosphate = 5-(methylsulfanyl)-D-ribulose 1-phosphate. In terms of biological role, catalyzes the interconversion of methylthioribose-1-phosphate (MTR-1-P) into methylthioribulose-1-phosphate (MTRu-1-P). The polypeptide is Putative methylthioribose-1-phosphate isomerase (Sulfolobus acidocaldarius (strain ATCC 33909 / DSM 639 / JCM 8929 / NBRC 15157 / NCIMB 11770)).